A 1409-amino-acid chain; its full sequence is Adhesion and penetration protein autotransporter (1409 aa).

Positions 1 to 25 (MKKTVFRLNFLTACVSLGIASQAWA) are cleaved as a signal peptide. The Peptidase S6 domain occupies 26-294 (GHTYFGIDYQ…LIREEWFYNE (269 aa)). Residue S250 is part of the active site. Disordered regions lie at residues 866-888 (YSAS…TPTS) and 1016-1078 (AKQV…SKRA). Positions 1057–1067 (VEQTTETQTSK) are enriched in polar residues. Over residues 1068–1077 (PKTKKGRSKR) the composition is skewed to basic residues. In terms of domain architecture, Autotransporter spans 1156 to 1409 (VDQAQSALWT…NVGVKLGYRW (254 aa)).

It localises to the periplasm. Its subcellular location is the secreted. The protein localises to the cell surface. The protein resides in the cell outer membrane. Functionally, probable protease; promotes adherence and invasion by directly binding to a host cell structure. The chain is Adhesion and penetration protein autotransporter (hap) from Haemophilus influenzae (strain ATCC 51907 / DSM 11121 / KW20 / Rd).